The primary structure comprises 158 residues: Transcription elongation factor GreA (158 aa).

The protein belongs to the GreA/GreB family.

Necessary for efficient RNA polymerase transcription elongation past template-encoded arresting sites. The arresting sites in DNA have the property of trapping a certain fraction of elongating RNA polymerases that pass through, resulting in locked ternary complexes. Cleavage of the nascent transcript by cleavage factors such as GreA or GreB allows the resumption of elongation from the new 3'terminus. GreA releases sequences of 2 to 3 nucleotides. This Bacillus licheniformis (strain ATCC 14580 / DSM 13 / JCM 2505 / CCUG 7422 / NBRC 12200 / NCIMB 9375 / NCTC 10341 / NRRL NRS-1264 / Gibson 46) protein is Transcription elongation factor GreA.